The sequence spans 341 residues: Phosphoribosylformylglycinamidine cyclo-ligase (341 aa).

Belongs to the AIR synthase family.

The protein localises to the cytoplasm. It carries out the reaction 2-formamido-N(1)-(5-O-phospho-beta-D-ribosyl)acetamidine + ATP = 5-amino-1-(5-phospho-beta-D-ribosyl)imidazole + ADP + phosphate + H(+). It participates in purine metabolism; IMP biosynthesis via de novo pathway; 5-amino-1-(5-phospho-D-ribosyl)imidazole from N(2)-formyl-N(1)-(5-phospho-D-ribosyl)glycinamide: step 2/2. The polypeptide is Phosphoribosylformylglycinamidine cyclo-ligase (Synechococcus elongatus (strain ATCC 33912 / PCC 7942 / FACHB-805) (Anacystis nidulans R2)).